Reading from the N-terminus, the 779-residue chain is MDSCEEECDLEVDSDEEDQLFGEKCISLLSSLLPLSSSTLLSNAINLELDEVERPPPLLNVLEEQQFPKVCANIEEENELEADTEEDIAETADDEESKDPVEKTENFEPSVTMDTYDFPDPYPVQIRARPQVPPKPPIDTVRYSMNNIKESADWQLDELLEELEALETQLNSSNGGDQLLLGVSGIPASSSRENVKSISTLPPPPPALSYHQTPQQPQLLHHHNNHLGYQNGIHQITSINSAASSCSSPDGDSAFGDSSSTESSNNRCRNSAFSSNDSCRDSLNTPSPTQVSPRNGELNAEEAKAQKIRQALEKMKEAKVTKIFVKFFVEDGEALQLLIDERWTVADTLKQLAEKNHIALMEDHCIVEEYPELYIKRVYEDHEKVVENIQMWVQDSPNKLYFMRRPDKYAFISRPELYLLTPKTSDHMEIPSGDQWTIDVKQKFVSEYFHREPVVPPEMEGFLYLKSDGRKSWKKHYFVLRPSGLYYAPKSKKPTTKDLTCLMNLHSNQVYTGIGWEKKYKSPTPWCISIKLTALQMKRSQFIKYICAEDEMTFKKWLVALRIAKNGAELLENYERACQIRRETLGPASSMSAASSSTAISEVPHSLSHHQRTPSVASSIQLSSHMMNNPTHPLSVNVRNQSPASFSVNSCQQSHPSRTSAKLEIQYDEQPTGTIKRAPLDVLRRVSRASTSSPTIPQEESDSDEEFPAPPPVASVMRMPPPVTPPKPCTPLTSKKAPPPPPKRSDTTKLQSASPMAPAKNDLEAALARRREKMATMEC.

Residues 78 to 97 (NELEADTEEDIAETADDEES) are compositionally biased toward acidic residues. Disordered stretches follow at residues 78–105 (NELE…EKTE), 189–217 (SSSR…PQQP), and 242–302 (AASS…NAEE). Positions 189-200 (SSSRENVKSIST) are enriched in polar residues. Residues 242 to 254 (AASSCSSPDGDSA) are compositionally biased toward low complexity. Residues 256 to 293 (GDSSSTESSNNRCRNSAFSSNDSCRDSLNTPSPTQVSP) show a composition bias toward polar residues. Residues 317-407 (EAKVTKIFVK…NKLYFMRRPD (91 aa)) enclose the Ras-associating domain. A PH domain is found at 456-566 (PPEMEGFLYL…WLVALRIAKN (111 aa)). 2 stretches are compositionally biased toward polar residues: residues 645–660 (SFSV…SRTS) and 688–698 (RASTSSPTIPQ). The tract at residues 645–763 (SFSVNSCQQS…SPMAPAKNDL (119 aa)) is disordered. A compositionally biased stretch (pro residues) spans 708–729 (PAPPPVASVMRMPPPVTPPKPC).

Belongs to the MRL family. In terms of assembly, may interact (via Ras-associating and PH domains) with ced-10 (GTP-bound form).

The protein resides in the perikaryon. In terms of biological role, required cell non-autonomously for proper development of the excretory canals and for the long-range anterior-posterior migrations of embryonic neurons CAN, ALM and HSN. Plays a role, probably downstream of ced-10/rac1, in orientating axonal growth of HSN and AVM neurons in response to guidance cues such as slt-1. May regulate growth cone polarization by promoting asymmetric F-actin assembly. May be involved in signal transduction during cell migration. The chain is Abnormal cell migration protein 10 from Caenorhabditis elegans.